Reading from the N-terminus, the 432-residue chain is Histidine--tRNA ligase (432 aa).

The protein belongs to the class-II aminoacyl-tRNA synthetase family.

The protein resides in the cytoplasm. It catalyses the reaction tRNA(His) + L-histidine + ATP = L-histidyl-tRNA(His) + AMP + diphosphate + H(+). The chain is Histidine--tRNA ligase from Halobacterium salinarum (strain ATCC 29341 / DSM 671 / R1).